The sequence spans 294 residues: Nucleotide-binding protein Maqu_2718 (294 aa).

8–15 (GRSGSGKS) lines the ATP pocket. GTP is bound at residue 61-64 (DARN).

This sequence belongs to the RapZ-like family.

Functionally, displays ATPase and GTPase activities. This chain is Nucleotide-binding protein Maqu_2718, found in Marinobacter nauticus (strain ATCC 700491 / DSM 11845 / VT8) (Marinobacter aquaeolei).